Reading from the N-terminus, the 440-residue chain is tRNA-2-methylthio-N(6)-dimethylallyladenosine synthase (440 aa).

In terms of domain architecture, MTTase N-terminal spans 2-117 (KGLYIKTYGC…LPELIVKASR (116 aa)). Residues Cys-11, Cys-47, Cys-80, Cys-157, Cys-161, and Cys-164 each contribute to the [4Fe-4S] cluster site. The 232-residue stretch at 143–374 (NSQGSSAFLA…QELISKQQLE (232 aa)) folds into the Radical SAM core domain. The TRAM domain occupies 377–440 (QSMIGKTIPV…RQNSLLGCAA (64 aa)).

It belongs to the methylthiotransferase family. MiaB subfamily. In terms of assembly, monomer. [4Fe-4S] cluster serves as cofactor.

Its subcellular location is the cytoplasm. The catalysed reaction is N(6)-dimethylallyladenosine(37) in tRNA + (sulfur carrier)-SH + AH2 + 2 S-adenosyl-L-methionine = 2-methylsulfanyl-N(6)-dimethylallyladenosine(37) in tRNA + (sulfur carrier)-H + 5'-deoxyadenosine + L-methionine + A + S-adenosyl-L-homocysteine + 2 H(+). Catalyzes the methylthiolation of N6-(dimethylallyl)adenosine (i(6)A), leading to the formation of 2-methylthio-N6-(dimethylallyl)adenosine (ms(2)i(6)A) at position 37 in tRNAs that read codons beginning with uridine. In Wolbachia pipientis subsp. Culex pipiens (strain wPip), this protein is tRNA-2-methylthio-N(6)-dimethylallyladenosine synthase.